We begin with the raw amino-acid sequence, 153 residues long: Pheromone-binding protein Gp-9 (153 aa).

The first 19 residues, 1-19 (MKTFVLHIFIFALVAFASA), serve as a signal peptide directing secretion. Cystine bridges form between Cys-37–Cys-77, Cys-73–Cys-129, and Cys-118–Cys-138.

It belongs to the PBP/GOBP family. As to quaternary structure, homodimer.

The protein localises to the secreted. Its function is as follows. Colony queen number, a major feature of social organization, is associated with worker genotype for Gp-9. Colonies are headed by either a single reproductive queen (monogyne form) or multiple queens (polygyne form). Differences in worker Gp-9 genotypes between social forms may cause differences in workers' abilities to recognize queens and regulate their numbers. The protein is Pheromone-binding protein Gp-9 of Solenopsis substituta (Fire ant).